Reading from the N-terminus, the 394-residue chain is MTQLETRTEPMVVNFGPHHPSMHGVLRLVVTLDGEDVVDCEPVIGYLHRGMEKIAENRTNVMFVPYVSRMDYAAGMFYEAVVVNAPEKMADIPVPKRASYIRVLMLELNRIANHLLWLGPFLADVGAQTPFFYIFREREMIYDLWEAATGQRLINNNYFRIGGVAADLPWGWLEKCRDFCDWFGPKIDEYEKLITNNPIFRRRIEGLGTIEKQDAINWSLSGPMLRASGVPWDLRKVDHYECYDDFDWQVASEKEGDCYARYRVRIEEMRQSLKILRQACDMIPGGPTENLEAKRLNEGKGSDAAGFDFQYVAKKVAPTFKIPNGELYTRLESGKGEIGVFIQGNNDVTPWRFKIRAADSNNLQILPHILKGHKVADIMAILGSIDVIMGSVDR.

Belongs to the complex I 49 kDa subunit family. NDH-1 can be composed of about 15 different subunits; different subcomplexes with different compositions have been identified which probably have different functions.

Its subcellular location is the cellular thylakoid membrane. It catalyses the reaction a plastoquinone + NADH + (n+1) H(+)(in) = a plastoquinol + NAD(+) + n H(+)(out). It carries out the reaction a plastoquinone + NADPH + (n+1) H(+)(in) = a plastoquinol + NADP(+) + n H(+)(out). In terms of biological role, NDH-1 shuttles electrons from an unknown electron donor, via FMN and iron-sulfur (Fe-S) centers, to quinones in the respiratory and/or the photosynthetic chain. The immediate electron acceptor for the enzyme in this species is believed to be plastoquinone. Couples the redox reaction to proton translocation, and thus conserves the redox energy in a proton gradient. Cyanobacterial NDH-1 also plays a role in inorganic carbon-concentration. The protein is NAD(P)H-quinone oxidoreductase subunit H of Parasynechococcus marenigrum (strain WH8102).